Here is a 719-residue protein sequence, read N- to C-terminus: Polyribonucleotide nucleotidyltransferase (719 aa).

Positions 487 and 493 each coordinate Mg(2+). One can recognise a KH domain in the interval proline 554 to isoleucine 613. The 69-residue stretch at glycine 623 to lysine 691 folds into the S1 motif domain. The interval lysine 691–glutamate 719 is disordered. A compositionally biased stretch (basic and acidic residues) spans leucine 701–glutamate 719.

The protein belongs to the polyribonucleotide nucleotidyltransferase family. The cofactor is Mg(2+).

Its subcellular location is the cytoplasm. It carries out the reaction RNA(n+1) + phosphate = RNA(n) + a ribonucleoside 5'-diphosphate. In terms of biological role, involved in mRNA degradation. Catalyzes the phosphorolysis of single-stranded polyribonucleotides processively in the 3'- to 5'-direction. The sequence is that of Polyribonucleotide nucleotidyltransferase from Bradyrhizobium sp. (strain ORS 278).